We begin with the raw amino-acid sequence, 178 residues long: Large ribosomal subunit protein uL5 (178 aa).

N-acetylalanine is present on Ala-2. A Glycyl lysine isopeptide (Lys-Gly) (interchain with G-Cter in SUMO2) cross-link involves residue Lys-38. Thr-44 and Thr-47 each carry phosphothreonine. An N6-acetyllysine; alternate modification is found at Lys-52. Lys-52 participates in a covalent cross-link: Glycyl lysine isopeptide (Lys-Gly) (interchain with G-Cter in SUMO2); alternate. Lys-85 carries the N6-acetyllysine modification. Residue Lys-154 forms a Glycyl lysine isopeptide (Lys-Gly) (interchain with G-Cter in SUMO2) linkage.

Belongs to the universal ribosomal protein uL5 family. In terms of assembly, component of the large ribosomal subunit (LSU). Part of the 5S RNP complex, which is a LSU subcomplex composed of the 5S RNA, RPL5 and RPL11. Component of a hexameric 5S RNP precursor complex, composed of 5S RNA, RRS1, RPF2/BXDC1, RPL5, RPL11 and HEATR3; this complex acts as a precursor for ribosome assembly. Interacts with PML. Interacts with MDM2 (via its RanBP2-type zinc finger domain); negatively regulates MDM2-mediated TP53 ubiquitination and degradation. Interacts with NOP53; retains RPL11 into the nucleolus.

It localises to the nucleus. Its subcellular location is the nucleolus. It is found in the cytoplasm. In terms of biological role, component of the ribosome, a large ribonucleoprotein complex responsible for the synthesis of proteins in the cell. The small ribosomal subunit (SSU) binds messenger RNAs (mRNAs) and translates the encoded message by selecting cognate aminoacyl-transfer RNA (tRNA) molecules. The large subunit (LSU) contains the ribosomal catalytic site termed the peptidyl transferase center (PTC), which catalyzes the formation of peptide bonds, thereby polymerizing the amino acids delivered by tRNAs into a polypeptide chain. The nascent polypeptides leave the ribosome through a tunnel in the LSU and interact with protein factors that function in enzymatic processing, targeting, and the membrane insertion of nascent chains at the exit of the ribosomal tunnel. As part of the 5S RNP/5S ribonucleoprotein particle it is an essential component of the LSU, required for its formation and the maturation of rRNAs. It also couples ribosome biogenesis to p53/TP53 activation. As part of the 5S RNP it accumulates in the nucleoplasm and inhibits MDM2, when ribosome biogenesis is perturbed, mediating the stabilization and the activation of TP53. Promotes nucleolar location of PML. The polypeptide is Large ribosomal subunit protein uL5 (RPL11) (Pongo abelii (Sumatran orangutan)).